The sequence spans 500 residues: MRMPTGSELWPIAIFTIIFLLLVDLMHRRQRWTSRYPPGPVPWPVLGNLLQIDFQNMPAGFQKLRCRFGDLFSLQLAFESVVVLNGLPALREALVKYSEDTADRPPLHFNDQSGFGPRSQGVVLARYGPAWRQQRRFSVSTFRHFGLGKKSLEQWVTEEARCLCAAFADHSGFPFSPNTLLDKAVCNVIASLLFACRFEYNDPRFIRLLDLLKDTLEEESGFLPMLLNVFPMLLHIPGLLGKVFSGKKAFVAMLDELLTEHKVTWDPAQPPRDLTDAFLAEVEKAKGNPESSFNDENLRVVVADLFMAGMVTTSTTLTWALLFMILRPDVQCRVQQEIDEVIGQVRRPEMADQARMPFTNAVIHEVQRFADILPLGVPHKTSRDIEVQGFLIPKGTTLIINLSSVLKDETVWEKPLRFHPEHFLDAQGNFVKHEAFMPFSAGRRACLGEPLARMELFLFFTCLLQRFSFSVPAGQPRPSNYGVFGALTTPRPYQLCASPR.

A heme-binding site is contributed by cysteine 446.

This sequence belongs to the cytochrome P450 family. Heme serves as cofactor. In terms of tissue distribution, brain.

The protein localises to the endoplasmic reticulum membrane. The protein resides in the microsome membrane. It catalyses the reaction an organic molecule + reduced [NADPH--hemoprotein reductase] + O2 = an alcohol + oxidized [NADPH--hemoprotein reductase] + H2O + H(+). Functionally, cytochromes P450 are a group of heme-thiolate monooxygenases. In liver microsomes, this enzyme is involved in an NADPH-dependent electron transport pathway. It oxidizes a variety of structurally unrelated compounds, including steroids, fatty acids, and xenobiotics. The sequence is that of Cytochrome P450 2D4 (Cyp2d4) from Rattus norvegicus (Rat).